The primary structure comprises 342 residues: Pre-mRNA-splicing factor 18 (342 aa).

N-acetylmethionine is present on Met-1.

The protein belongs to the PRP18 family. As to quaternary structure, heterodimer with PPIH. Interacts with PRPF4 and with the spliceosome. Part of a complex containing U4/U6 snRNPs. Also detected in the cytoplasm. As to expression, detected in brain, heart, liver and skeletal muscle.

It localises to the nucleus speckle. Functionally, participates in the second step of pre-mRNA splicing. Down-regulates the expression of potassium channel subunits. This is Pre-mRNA-splicing factor 18 (Prpf18) from Rattus norvegicus (Rat).